The sequence spans 654 residues: Macrolide export ATP-binding/permease protein MacB (654 aa).

The ABC transporter domain occupies 6–244 (IELRGLRREF…RAGDAPTRQP (239 aa)). Residue 42-49 (GASGSGKS) coordinates ATP. A run of 4 helical transmembrane segments spans residues 278 to 298 (FLTM…VAVG), 527 to 547 (LTLM…IGVM), 584 to 604 (VVCL…AALF), and 619 to 639 (SIAA…YLPA).

Belongs to the ABC transporter superfamily. Macrolide exporter (TC 3.A.1.122) family. As to quaternary structure, homodimer.

It is found in the cell inner membrane. Its function is as follows. Non-canonical ABC transporter that contains transmembrane domains (TMD), which form a pore in the inner membrane, and an ATP-binding domain (NBD), which is responsible for energy generation. Confers resistance against macrolides. The polypeptide is Macrolide export ATP-binding/permease protein MacB (Rhodopseudomonas palustris (strain HaA2)).